A 317-amino-acid polypeptide reads, in one-letter code: 17-beta-hydroxysteroid dehydrogenase type 6 (317 aa).

The N-terminal stretch at 1 to 17 (MWLYLAVLLGLYYLLRW) is a signal peptide. 33 to 57 (FITGCDSGFGNQLARQLDLRGLRVL) is a binding site for NAD(+). 2 N-linked (GlcNAc...) asparagine glycosylation sites follow: Asn71 and Asn161. Ser164 is a substrate binding site. Catalysis depends on Tyr176, which acts as the Proton acceptor.

It belongs to the short-chain dehydrogenases/reductases (SDR) family.

The protein localises to the microsome membrane. It localises to the endoplasmic reticulum membrane. It catalyses the reaction all-trans-retinol--[retinol-binding protein] + NAD(+) = all-trans-retinal--[retinol-binding protein] + NADH + H(+). The enzyme catalyses all-trans-retinol + NAD(+) = all-trans-retinal + NADH + H(+). It carries out the reaction androsterone + NAD(+) = 5alpha-androstan-3,17-dione + NADH + H(+). The catalysed reaction is testosterone + NAD(+) = androst-4-ene-3,17-dione + NADH + H(+). It catalyses the reaction 5alpha-androstane-3alpha,17beta-diol + NAD(+) = 17beta-hydroxy-5alpha-androstan-3-one + NADH + H(+). The enzyme catalyses 17beta-estradiol + NAD(+) = estrone + NADH + H(+). It carries out the reaction 17beta-estradiol + NADP(+) = estrone + NADPH + H(+). The catalysed reaction is 3alpha-hydroxy-5alpha-pregnan-20-one + NAD(+) = 5alpha-pregnane-3,20-dione + NADH + H(+). It catalyses the reaction 5alpha-androstane-3beta,17beta-diol + NAD(+) = 17beta-hydroxy-5alpha-androstan-3-one + NADH + H(+). The enzyme catalyses 3beta-hydroxy-5alpha-androstan-17-one + NAD(+) = 5alpha-androstan-3,17-dione + NADH + H(+). Its function is as follows. NAD-dependent oxidoreductase with broad substrate specificity that shows both oxidative and reductive activity (in vitro). Has 17-beta-hydroxysteroid dehydrogenase activity towards various steroids (in vitro). Converts 5-alpha-androstan-3-alpha,17-beta-diol to androsterone and estradiol to estrone (in vitro). Has 3-alpha-hydroxysteroid dehydrogenase activity towards androsterone (in vitro). Has retinol dehydrogenase activity towards all-trans-retinol (in vitro). Can convert androsterone to epi-androsterone. Androsterone is first oxidized to 5-alpha-androstane-3,17-dione and then reduced to epi-andosterone. Can act on both C-19 and C-21 3-alpha-hydroxysteroids. The chain is 17-beta-hydroxysteroid dehydrogenase type 6 (HSD17B6) from Bos taurus (Bovine).